Consider the following 938-residue polypeptide: LPS-assembly protein LptD (938 aa).

Positions 1–33 (MAVKHPAFRKKFPLLVTGSLLALQPAFSLQSFA) are cleaved as a signal peptide. Residues 52 to 96 (KTATSALPPRPQHSRSAVSTTSGSATATATKQEPAPVLVTESKGR) are disordered. Low complexity predominate over residues 65-81 (SRSAVSTTSGSATATAT).

It belongs to the LptD family. As to quaternary structure, component of the lipopolysaccharide transport and assembly complex. Interacts with LptE and LptA.

It localises to the cell outer membrane. Together with LptE, is involved in the assembly of lipopolysaccharide (LPS) at the surface of the outer membrane. The sequence is that of LPS-assembly protein LptD from Ectopseudomonas mendocina (strain ymp) (Pseudomonas mendocina).